A 775-amino-acid polypeptide reads, in one-letter code: Cation channel sperm-associated protein subunit epsilon-like protein (775 aa).

A signal peptide spans 1–20 (MLARRVVAALLLWLSCCVSA). Asparagine 62 and asparagine 114 each carry an N-linked (GlcNAc...) asparagine glycan.

The protein belongs to the CATSPERD family.

The sequence is that of Cation channel sperm-associated protein subunit epsilon-like protein from Mus musculus (Mouse).